The sequence spans 632 residues: 2-hydroxyacyl-CoA lyase 2 (632 aa).

Residues 13–33 (FFPSFLLLAFGTLVAAVLGVA) traverse the membrane as a helical segment. Glu-98 lines the thiamine diphosphate pocket. Ser-369 bears the Phosphoserine mark. A thiamine pyrophosphate binding region spans residues 470–550 (DFVATAAYLV…VIALVGNDAG (81 aa)). Positions 521 and 547 each coordinate Mg(2+).

It belongs to the TPP enzyme family. The cofactor is Mg(2+). Thiamine diphosphate serves as cofactor.

The protein resides in the endoplasmic reticulum membrane. It carries out the reaction 2-hydroxyoctadecanoyl-CoA = heptadecanal + formyl-CoA. The enzyme catalyses (2R)-hydroxyhexadecanoyl-CoA = pentadecanal + formyl-CoA. Endoplasmic reticulum 2-OH acyl-CoA lyase involved in the cleavage (C1 removal) reaction in the fatty acid alpha-oxydation in a thiamine pyrophosphate (TPP)-dependent manner. Involved in the phytosphingosine degradation pathway. This chain is 2-hydroxyacyl-CoA lyase 2 (Ilvbl), found in Mus musculus (Mouse).